A 460-amino-acid polypeptide reads, in one-letter code: MSNNYAIILAAGKGTRMKSDLPKVLHKVAGITMLEHVKRAVDAMEPAKTVTIVGHKAELVQAVLEGQSEFALQSEQLGTGHAVMMAEPALAGLEGQTLVIAGDTPLITGESLKNLINFHVSHKNVATILTAQADNPFGYGRIIRNADGEVQKIVEQKDANDFEKQVKEINTGTYLFDNKRLFEALKDINTDNAQGEYYLTDVISIFRQAGEKVGAYVLRDFDESLGVNDRVALATAEAVMRKRINEKHMVNGVTFINPDATYIDIDVEIGAEAVIEANVVLKGQTVIGERTVLTNGTRVRDAKIAADAVISNSDIEESVIEEGVTVGPYAHIRPGSLLKKDVHVGNFVEIKASTLGQGTKSGHLTYLGNATIGNNVNVGAGTITVNYDGKNKFKTTVGDNAFVGSNSTIIAPVTIGDNALLAAGSVITKDIPEDAIGIGRGRQENKEGYATRFPFHPSQK.

The pyrophosphorylase stretch occupies residues 1-230 (MSNNYAIILA…FDESLGVNDR (230 aa)). UDP-N-acetyl-alpha-D-glucosamine-binding positions include 9–12 (LAAG), Lys23, Gln73, and 78–79 (GT). A Mg(2+)-binding site is contributed by Asp103. The UDP-N-acetyl-alpha-D-glucosamine site is built by Gly140, Glu155, Asn170, and Asn228. A Mg(2+)-binding site is contributed by Asn228. The segment at 231 to 251 (VALATAEAVMRKRINEKHMVN) is linker. The segment at 252-460 (GVTFINPDAT…TRFPFHPSQK (209 aa)) is N-acetyltransferase. The UDP-N-acetyl-alpha-D-glucosamine site is built by Arg333 and Lys351. The active-site Proton acceptor is the His363. 2 residues coordinate UDP-N-acetyl-alpha-D-glucosamine: Tyr366 and Asn377. Acetyl-CoA is bound by residues Ala380, 386–387 (NY), Ser405, Ala423, and Arg440.

This sequence in the N-terminal section; belongs to the N-acetylglucosamine-1-phosphate uridyltransferase family. The protein in the C-terminal section; belongs to the transferase hexapeptide repeat family. In terms of assembly, homotrimer. Mg(2+) is required as a cofactor.

It localises to the cytoplasm. The catalysed reaction is alpha-D-glucosamine 1-phosphate + acetyl-CoA = N-acetyl-alpha-D-glucosamine 1-phosphate + CoA + H(+). It carries out the reaction N-acetyl-alpha-D-glucosamine 1-phosphate + UTP + H(+) = UDP-N-acetyl-alpha-D-glucosamine + diphosphate. The protein operates within nucleotide-sugar biosynthesis; UDP-N-acetyl-alpha-D-glucosamine biosynthesis; N-acetyl-alpha-D-glucosamine 1-phosphate from alpha-D-glucosamine 6-phosphate (route II): step 2/2. Its pathway is nucleotide-sugar biosynthesis; UDP-N-acetyl-alpha-D-glucosamine biosynthesis; UDP-N-acetyl-alpha-D-glucosamine from N-acetyl-alpha-D-glucosamine 1-phosphate: step 1/1. It participates in bacterial outer membrane biogenesis; LPS lipid A biosynthesis. Functionally, catalyzes the last two sequential reactions in the de novo biosynthetic pathway for UDP-N-acetylglucosamine (UDP-GlcNAc). The C-terminal domain catalyzes the transfer of acetyl group from acetyl coenzyme A to glucosamine-1-phosphate (GlcN-1-P) to produce N-acetylglucosamine-1-phosphate (GlcNAc-1-P), which is converted into UDP-GlcNAc by the transfer of uridine 5-monophosphate (from uridine 5-triphosphate), a reaction catalyzed by the N-terminal domain. The protein is Bifunctional protein GlmU of Streptococcus suis (strain 98HAH33).